Here is a 119-residue protein sequence, read N- to C-terminus: UPF0102 protein GFO_3098 (119 aa).

The protein belongs to the UPF0102 family.

The sequence is that of UPF0102 protein GFO_3098 from Christiangramia forsetii (strain DSM 17595 / CGMCC 1.15422 / KT0803) (Gramella forsetii).